A 578-amino-acid chain; its full sequence is Probable actinorhodin transporter (578 aa).

A disordered region spans residues 1–33 (MSSVEADEPDRATAPPSALLPEDGPGPDGTAAG). 12 helical membrane-spanning segments follow: residues 78–98 (VIQW…VVGG), 109–129 (MFVV…VAAG), 135–155 (AARF…LGLI), 170–190 (AFGP…GFLV), 202–222 (VFLI…LLLP), 232–252 (FDVV…FPLV), 259–279 (WPAW…GFVA), 306–326 (GLAV…LLAL), 341–361 (LTMT…GAVL), 369–389 (ALHG…LTIG), 444–464 (LGFT…LGSQ), and 546–566 (AMVR…ALAF).

This sequence belongs to the major facilitator superfamily. EmrB family.

The protein localises to the cell membrane. Functionally, promotes the efflux of actinorhodin. This Streptomyces coelicolor (strain ATCC BAA-471 / A3(2) / M145) protein is Probable actinorhodin transporter (actII-2).